The following is a 504-amino-acid chain: Arabinose import ATP-binding protein AraG (504 aa).

2 consecutive ABC transporter domains span residues 8–243 (LSFR…MVGR) and 256–499 (YGEE…MPKV). 40–47 (GENGAGKS) is an ATP binding site.

The protein belongs to the ABC transporter superfamily. Arabinose importer (TC 3.A.1.2.2) family. The complex is composed of two ATP-binding proteins (AraG), two transmembrane proteins (AraH) and a solute-binding protein (AraF).

The protein localises to the cell inner membrane. The enzyme catalyses L-arabinose(out) + ATP + H2O = L-arabinose(in) + ADP + phosphate + H(+). In terms of biological role, part of the ABC transporter complex AraFGH involved in arabinose import. Responsible for energy coupling to the transport system. This chain is Arabinose import ATP-binding protein AraG, found in Shigella sonnei (strain Ss046).